We begin with the raw amino-acid sequence, 317 residues long: 4-hydroxy-3-methylbut-2-enyl diphosphate reductase (317 aa).

Residue C12 coordinates [4Fe-4S] cluster. Residues H41 and H74 each coordinate (2E)-4-hydroxy-3-methylbut-2-enyl diphosphate. Positions 41 and 74 each coordinate dimethylallyl diphosphate. Isopentenyl diphosphate contacts are provided by H41 and H74. C97 provides a ligand contact to [4Fe-4S] cluster. Residue H125 participates in (2E)-4-hydroxy-3-methylbut-2-enyl diphosphate binding. H125 is a dimethylallyl diphosphate binding site. Residue H125 participates in isopentenyl diphosphate binding. The Proton donor role is filled by E127. T168 lines the (2E)-4-hydroxy-3-methylbut-2-enyl diphosphate pocket. C198 lines the [4Fe-4S] cluster pocket. S226, S227, N228, and S270 together coordinate (2E)-4-hydroxy-3-methylbut-2-enyl diphosphate. Dimethylallyl diphosphate contacts are provided by S226, S227, N228, and S270. 4 residues coordinate isopentenyl diphosphate: S226, S227, N228, and S270.

It belongs to the IspH family. As to quaternary structure, homodimer. [4Fe-4S] cluster is required as a cofactor.

It carries out the reaction isopentenyl diphosphate + 2 oxidized [2Fe-2S]-[ferredoxin] + H2O = (2E)-4-hydroxy-3-methylbut-2-enyl diphosphate + 2 reduced [2Fe-2S]-[ferredoxin] + 2 H(+). The enzyme catalyses dimethylallyl diphosphate + 2 oxidized [2Fe-2S]-[ferredoxin] + H2O = (2E)-4-hydroxy-3-methylbut-2-enyl diphosphate + 2 reduced [2Fe-2S]-[ferredoxin] + 2 H(+). Its pathway is isoprenoid biosynthesis; dimethylallyl diphosphate biosynthesis; dimethylallyl diphosphate from (2E)-4-hydroxy-3-methylbutenyl diphosphate: step 1/1. It participates in isoprenoid biosynthesis; isopentenyl diphosphate biosynthesis via DXP pathway; isopentenyl diphosphate from 1-deoxy-D-xylulose 5-phosphate: step 6/6. Its function is as follows. Catalyzes the conversion of 1-hydroxy-2-methyl-2-(E)-butenyl 4-diphosphate (HMBPP) into a mixture of isopentenyl diphosphate (IPP) and dimethylallyl diphosphate (DMAPP). Acts in the terminal step of the DOXP/MEP pathway for isoprenoid precursor biosynthesis. This Serratia proteamaculans (strain 568) protein is 4-hydroxy-3-methylbut-2-enyl diphosphate reductase.